Here is a 194-residue protein sequence, read N- to C-terminus: ATP-dependent Clp protease proteolytic subunit (194 aa).

Serine 99 acts as the Nucleophile in catalysis. Histidine 124 is a catalytic residue.

Belongs to the peptidase S14 family. Fourteen ClpP subunits assemble into 2 heptameric rings which stack back to back to give a disk-like structure with a central cavity, resembling the structure of eukaryotic proteasomes.

It localises to the cytoplasm. It catalyses the reaction Hydrolysis of proteins to small peptides in the presence of ATP and magnesium. alpha-casein is the usual test substrate. In the absence of ATP, only oligopeptides shorter than five residues are hydrolyzed (such as succinyl-Leu-Tyr-|-NHMec, and Leu-Tyr-Leu-|-Tyr-Trp, in which cleavage of the -Tyr-|-Leu- and -Tyr-|-Trp bonds also occurs).. In terms of biological role, cleaves peptides in various proteins in a process that requires ATP hydrolysis. Has a chymotrypsin-like activity. Plays a major role in the degradation of misfolded proteins. This chain is ATP-dependent Clp protease proteolytic subunit, found in Borrelia garinii subsp. bavariensis (strain ATCC BAA-2496 / DSM 23469 / PBi) (Borreliella bavariensis).